The primary structure comprises 86 residues: MARAGGHGMGNPVNVGIAVQADWENREFISNISLNVRRLFDFLLRFEATTKSKLASLNEKLDILERKLEVLEVQVSSATTNPSVFN.

The stretch at 47 to 81 (EATTKSKLASLNEKLDILERKLEVLEVQVSSATTN) forms a coiled coil.

This sequence belongs to the BRK1 family. As to quaternary structure, binds SCAR.

It is found in the cytoplasm. Its subcellular location is the cytoskeleton. Its function is as follows. Involved in regulation of actin and microtubule organization. Part of a WAVE complex that activates the Arp2/3 complex. The protein is Probable protein BRICK1 of Oryza sativa subsp. japonica (Rice).